A 289-amino-acid chain; its full sequence is Dihydropteroate synthase (289 aa).

The region spanning 28-282 (TYVMGILNTT…DVEAMAQICK (255 aa)) is the Pterin-binding domain. N35 lines the Mg(2+) pocket. (7,8-dihydropterin-6-yl)methyl diphosphate contacts are provided by residues T75, D109, N128, D199, K235, and 270–272 (RVH).

Belongs to the DHPS family. Mg(2+) is required as a cofactor.

It carries out the reaction (7,8-dihydropterin-6-yl)methyl diphosphate + 4-aminobenzoate = 7,8-dihydropteroate + diphosphate. It functions in the pathway cofactor biosynthesis; tetrahydrofolate biosynthesis; 7,8-dihydrofolate from 2-amino-4-hydroxy-6-hydroxymethyl-7,8-dihydropteridine diphosphate and 4-aminobenzoate: step 1/2. Its function is as follows. Catalyzes the condensation of para-aminobenzoate (pABA) with 6-hydroxymethyl-7,8-dihydropterin diphosphate (DHPt-PP) to form 7,8-dihydropteroate (H2Pte), the immediate precursor of folate derivatives. The sequence is that of Dihydropteroate synthase (folP) from Synechocystis sp. (strain ATCC 27184 / PCC 6803 / Kazusa).